Consider the following 186-residue polypeptide: Peptidyl-tRNA hydrolase (186 aa).

TRNA is bound at residue Y16. The Proton acceptor role is filled by H21. Residues Y60 and N62 each contribute to the tRNA site.

It belongs to the PTH family. As to quaternary structure, monomer.

It localises to the cytoplasm. The enzyme catalyses an N-acyl-L-alpha-aminoacyl-tRNA + H2O = an N-acyl-L-amino acid + a tRNA + H(+). Hydrolyzes ribosome-free peptidyl-tRNAs (with 1 or more amino acids incorporated), which drop off the ribosome during protein synthesis, or as a result of ribosome stalling. In terms of biological role, catalyzes the release of premature peptidyl moieties from peptidyl-tRNA molecules trapped in stalled 50S ribosomal subunits, and thus maintains levels of free tRNAs and 50S ribosomes. The chain is Peptidyl-tRNA hydrolase from Tropheryma whipplei (strain Twist) (Whipple's bacillus).